The primary structure comprises 208 residues: Imidazoleglycerol-phosphate dehydratase (208 aa).

This sequence belongs to the imidazoleglycerol-phosphate dehydratase family.

The protein localises to the cytoplasm. It catalyses the reaction D-erythro-1-(imidazol-4-yl)glycerol 3-phosphate = 3-(imidazol-4-yl)-2-oxopropyl phosphate + H2O. Its pathway is amino-acid biosynthesis; L-histidine biosynthesis; L-histidine from 5-phospho-alpha-D-ribose 1-diphosphate: step 6/9. The protein is Imidazoleglycerol-phosphate dehydratase of Symbiobacterium thermophilum (strain DSM 24528 / JCM 14929 / IAM 14863 / T).